The following is a 162-amino-acid chain: SsrA-binding protein (162 aa).

Residues 140-162 form a disordered region; it reads EDRRHDIKERETKREMDRAMRRR.

Belongs to the SmpB family.

It localises to the cytoplasm. Required for rescue of stalled ribosomes mediated by trans-translation. Binds to transfer-messenger RNA (tmRNA), required for stable association of tmRNA with ribosomes. tmRNA and SmpB together mimic tRNA shape, replacing the anticodon stem-loop with SmpB. tmRNA is encoded by the ssrA gene; the 2 termini fold to resemble tRNA(Ala) and it encodes a 'tag peptide', a short internal open reading frame. During trans-translation Ala-aminoacylated tmRNA acts like a tRNA, entering the A-site of stalled ribosomes, displacing the stalled mRNA. The ribosome then switches to translate the ORF on the tmRNA; the nascent peptide is terminated with the 'tag peptide' encoded by the tmRNA and targeted for degradation. The ribosome is freed to recommence translation, which seems to be the essential function of trans-translation. This Myxococcus xanthus (strain DK1622) protein is SsrA-binding protein.